Here is a 487-residue protein sequence, read N- to C-terminus: L-tartrate/succinate antiporter (487 aa).

Transmembrane regions (helical) follow at residues 10-30, 33-53, 54-74, 93-113, 137-157, 189-209, 236-256, 292-312, 313-333, 340-360, 370-390, 393-413, 418-438, and 465-485; these read YLAP…AGLE, TWLY…EPVP, GAVV…WLLF, WAVS…FMFG, TLFL…VTPS, IGSY…AIFL, FLGM…LAYV, LIVG…AAMV, GYSV…DIVS, VFFW…TGFI, SLSG…FYLL, FFAS…AAAL, IPLP…SILT, and IFGL…MPVV.

Belongs to the SLC13A/DASS transporter (TC 2.A.47) family. DIT1 subfamily.

It is found in the cell inner membrane. The catalysed reaction is (2R,3R)-tartrate(out) + succinate(in) = (2R,3R)-tartrate(in) + succinate(out). Functionally, catalyzes the uptake of tartrate in exchange for intracellular succinate. Essential for anaerobic L-tartrate fermentation. This is L-tartrate/succinate antiporter (ttdT) from Shigella sonnei (strain Ss046).